Here is a 557-residue protein sequence, read N- to C-terminus: Protein NRT1/ PTR FAMILY 5.14 (557 aa).

2 helical membrane passes run 35-55 (AALFIIGVEVAERFAYYGIGS) and 78-98 (AWSGIATLLPVLGAFVADAFL). Thr-103 is subject to Phosphothreonine. The next 10 helical transmembrane spans lie at 104–124 (IIISSLIYVLGLAFLTLSAFL), 133–153 (SSTSSFLNVLFFFSLYLVAIG), 183–203 (FFNWWYLSLSAGICFAILVVV), 209–229 (FSWAFGFGIPCVFMVISLVLF), 320–340 (IPVWFTTLAYAIPYAQYMTFF), 357–377 (IPPASLQVFIGISIVLFVPIY), 401–421 (IGTGIVLSTITMVIAALVEFK), 443–463 (IWWLIPQYLLLGLADVYTLVG), 479–499 (IGLALYLSALGVGSLLSSLLI), and 526–546 (YFYWLLAIVSAVGFFTFLFIS).

Belongs to the major facilitator superfamily. Proton-dependent oligopeptide transporter (POT/PTR) (TC 2.A.17) family. Expressed in roots.

It is found in the membrane. The polypeptide is Protein NRT1/ PTR FAMILY 5.14 (NPF5.14) (Arabidopsis thaliana (Mouse-ear cress)).